Reading from the N-terminus, the 317-residue chain is L-lactate dehydrogenase 2 (317 aa).

Residues valine 16, aspartate 37, lysine 42, tyrosine 68, and 82–83 contribute to the NAD(+) site; that span reads GA. Glutamine 85 and arginine 91 together coordinate substrate. Residues threonine 104, 121–123, and threonine 146 contribute to the NAD(+) site; that span reads ASN. Position 123–126 (123–126) interacts with substrate; the sequence is NPVD. Substrate is bound at residue 151-154; the sequence is DTTR. Beta-D-fructose 1,6-bisphosphate-binding residues include arginine 156 and histidine 171. The Proton acceptor role is filled by histidine 178. Tyrosine 223 carries the post-translational modification Phosphotyrosine. Threonine 232 serves as a coordination point for substrate.

This sequence belongs to the LDH/MDH superfamily. LDH family. As to quaternary structure, homotetramer.

Its subcellular location is the cytoplasm. It catalyses the reaction (S)-lactate + NAD(+) = pyruvate + NADH + H(+). The protein operates within fermentation; pyruvate fermentation to lactate; (S)-lactate from pyruvate: step 1/1. Its activity is regulated as follows. Allosterically activated by fructose 1,6-bisphosphate (FBP). In terms of biological role, catalyzes the conversion of lactate to pyruvate. In Enterococcus faecalis (strain ATCC 700802 / V583), this protein is L-lactate dehydrogenase 2.